Here is a 538-residue protein sequence, read N- to C-terminus: Putative cysteine ligase BshC (538 aa).

The stretch at 248 to 268 (ISKYKEVQEGLRNQQEVIKEL) forms a coiled coil.

The protein belongs to the BshC family.

Its function is as follows. Involved in bacillithiol (BSH) biosynthesis. May catalyze the last step of the pathway, the addition of cysteine to glucosamine malate (GlcN-Mal) to generate BSH. This Bacillus cereus (strain B4264) protein is Putative cysteine ligase BshC.